The chain runs to 67 residues: Large ribosomal subunit protein uL29 (67 aa).

It belongs to the universal ribosomal protein uL29 family.

This chain is Large ribosomal subunit protein uL29, found in Clostridium acetobutylicum (strain ATCC 824 / DSM 792 / JCM 1419 / IAM 19013 / LMG 5710 / NBRC 13948 / NRRL B-527 / VKM B-1787 / 2291 / W).